An 84-amino-acid chain; its full sequence is Large ribosomal subunit protein bL31B (84 aa).

It belongs to the bacterial ribosomal protein bL31 family. Type B subfamily. Part of the 50S ribosomal subunit.

The chain is Large ribosomal subunit protein bL31B from Staphylococcus aureus (strain Mu3 / ATCC 700698).